The following is a 184-amino-acid chain: Large ribosomal subunit protein uL6 (184 aa).

It belongs to the universal ribosomal protein uL6 family. Part of the 50S ribosomal subunit.

Its function is as follows. This protein binds to the 23S rRNA, and is important in its secondary structure. It is located near the subunit interface in the base of the L7/L12 stalk, and near the tRNA binding site of the peptidyltransferase center. This is Large ribosomal subunit protein uL6 from Aster yellows witches'-broom phytoplasma (strain AYWB).